We begin with the raw amino-acid sequence, 357 residues long: CD4+ T-cell-stimulating antigen (357 aa).

A signal peptide spans 1 to 22 (MKKRTFALALSMIIASGVVLGA). Cysteine 23 carries the N-palmitoyl cysteine lipid modification. The S-diacylglycerol cysteine moiety is linked to residue cysteine 23.

It belongs to the BMP lipoprotein family.

It localises to the cell membrane. The polypeptide is CD4+ T-cell-stimulating antigen (tcsA) (Listeria innocua serovar 6a (strain ATCC BAA-680 / CLIP 11262)).